A 121-amino-acid chain; its full sequence is Large ribosomal subunit protein bL19 (121 aa).

The protein belongs to the bacterial ribosomal protein bL19 family.

Functionally, this protein is located at the 30S-50S ribosomal subunit interface and may play a role in the structure and function of the aminoacyl-tRNA binding site. The chain is Large ribosomal subunit protein bL19 from Legionella pneumophila (strain Paris).